The primary structure comprises 530 residues: Probable basic-leucine zipper transcription factor L (530 aa).

Low complexity-rich tracts occupy residues 1–17 and 24–39; these read MYSPSSPQSSEPMSPES and SINNSNSSNNSSANQS. The interval 1-76 is disordered; it reads MYSPSSPQSS…QSAALSRSRK (76 aa). Residues 55–118 form the bZIP domain; the sequence is VKKRQVRLLK…FETKSRLEFL (64 aa). A basic motif region spans residues 56-77; that stretch reads KKRQVRLLKNRQSAALSRSRKK. Residues 83-104 are leucine-zipper; sequence LESKAQELTHSTQELHVQYNKI. Disordered regions lie at residues 142-177, 216-258, and 389-481; these read NNIKSHSRSNSSSSSLSSSPTTPNTTTTTTTSTTPV, SQNK…SPTP, and HHHH…SQIN. Composition is skewed to low complexity over residues 149-176 and 220-247; these read RSNSSSSSLSSSPTTPNTTTTTTTSTTP and NNNNNNNNNNNNNNNNNNNNNNNNNTTN. A compositionally biased stretch (polar residues) spans 248 to 257; sequence LLDQQQQSPT. Residues 436–478 are compositionally biased toward low complexity; it reads SSSPSSSSTSSPSTSSPSTPKSMGFPSPIFIGSSGSGPSSSGS.

This sequence belongs to the bZIP family.

Its subcellular location is the nucleus. Functionally, probable transcriptional regulator. In Dictyostelium discoideum (Social amoeba), this protein is Probable basic-leucine zipper transcription factor L (bzpL).